We begin with the raw amino-acid sequence, 470 residues long: Origin of replication complex subunit 4 (470 aa).

Gly63 to Ala70 contacts ATP.

The protein belongs to the ORC4 family. In terms of assembly, component of the origin recognition complex (ORC) composed of at least ORC1, ORC2, ORC3, ORC4, ORC5 and ORC6. ORC is regulated in a cell-cycle and development dependent manner. It is sequentially assembled at the exit from anaphase of mitosis and disassembled as cells enter S phase. Expressed in the shoot apical meristem (SAM), leaves, ears and roots (including root tips).

The protein localises to the nucleus. In terms of biological role, component of the origin recognition complex (ORC) that binds origins of replication. DNA-binding is ATP-dependent. The specific DNA sequences that define origins of replication have not been identified yet. ORC is required to assemble the pre-replication complex necessary to initiate DNA replication. The polypeptide is Origin of replication complex subunit 4 (Oryza sativa subsp. japonica (Rice)).